Reading from the N-terminus, the 129-residue chain is Prefoldin subunit alpha (129 aa).

The protein belongs to the prefoldin alpha subunit family. In terms of assembly, heterohexamer of two alpha and four beta subunits.

Its subcellular location is the cytoplasm. Its function is as follows. Molecular chaperone capable of stabilizing a range of proteins. Seems to fulfill an ATP-independent, HSP70-like function in archaeal de novo protein folding. This is Prefoldin subunit alpha from Thermofilum pendens (strain DSM 2475 / Hrk 5).